The primary structure comprises 111 residues: MKKRNISLKSKIEIQKIFKEGNLIRFSNLNLKMFCKSNHLIYSRLLVTFSKSFRGSVKRNRVRRLFKEAFRKRLELLEGRAIDIIFVVYYDRLDLTYFSIESLMKSLVLMV.

It belongs to the RnpA family. Consists of a catalytic RNA component (M1 or rnpB) and a protein subunit.

It catalyses the reaction Endonucleolytic cleavage of RNA, removing 5'-extranucleotides from tRNA precursor.. In terms of biological role, RNaseP catalyzes the removal of the 5'-leader sequence from pre-tRNA to produce the mature 5'-terminus. It can also cleave other RNA substrates such as 4.5S RNA. The protein component plays an auxiliary but essential role in vivo by binding to the 5'-leader sequence and broadening the substrate specificity of the ribozyme. The sequence is that of Ribonuclease P protein component from Borreliella afzelii (strain PKo) (Borrelia afzelii).